The sequence spans 622 residues: Low affinity potassium transport system protein Kup (622 aa).

The next 12 membrane-spanning stretches (helical) occupy residues 9–29 (LPAI…TSPL), 49–69 (VFGF…IKYL), 103–123 (VIMG…TPAI), 137–157 (PQLD…LFMI), 165–185 (VGKL…GLGL), 213–233 (VSFI…ALYA), 247–267 (WFTV…ALLL), 276–296 (PFFL…AALA), 337–357 (IYIP…IVSF), 363–383 (LAAA…ILST), 396–416 (FVAL…TANL), and 419–439 (LLSG…VMTT).

Belongs to the HAK/KUP transporter (TC 2.A.72) family.

The protein resides in the cell inner membrane. It catalyses the reaction K(+)(in) + H(+)(in) = K(+)(out) + H(+)(out). Responsible for the low-affinity transport of potassium into the cell. Likely operates as a K(+):H(+) symporter. This chain is Low affinity potassium transport system protein Kup, found in Escherichia coli O157:H7 (strain EC4115 / EHEC).